The primary structure comprises 429 residues: Adenylosuccinate synthetase (429 aa).

GTP-binding positions include 12-18 and 40-42; these read GDEGKGK and GHT. The Proton acceptor role is filled by Asp-13. 2 residues coordinate Mg(2+): Asp-13 and Gly-40. IMP is bound by residues 13-16, 38-41, Thr-128, Arg-142, Gln-223, Thr-238, and Arg-302; these read DEGK and NAGH. His-41 acts as the Proton donor in catalysis. Substrate is bound at residue 298-304; that stretch reads TVTGRPR. Residues Arg-304, 330 to 332, and 412 to 414 each bind GTP; these read LLD and SVG.

The protein belongs to the adenylosuccinate synthetase family. As to quaternary structure, homodimer. Mg(2+) is required as a cofactor.

The protein resides in the cytoplasm. It carries out the reaction IMP + L-aspartate + GTP = N(6)-(1,2-dicarboxyethyl)-AMP + GDP + phosphate + 2 H(+). It participates in purine metabolism; AMP biosynthesis via de novo pathway; AMP from IMP: step 1/2. Plays an important role in the de novo pathway of purine nucleotide biosynthesis. Catalyzes the first committed step in the biosynthesis of AMP from IMP. This chain is Adenylosuccinate synthetase, found in Lactobacillus gasseri (strain ATCC 33323 / DSM 20243 / BCRC 14619 / CIP 102991 / JCM 1131 / KCTC 3163 / NCIMB 11718 / NCTC 13722 / AM63).